The sequence spans 178 residues: UPF0114 protein HPSH_00970 (178 aa).

4 consecutive transmembrane segments (helical) span residues 15 to 35 (WLLAPLCIAMSLVLVVLGYVF), 54 to 74 (LVLSALGLVDLLFMAGLVLMV), 102 to 122 (FNALKLKVSLSIVAISAIFLL), and 145 to 165 (PIFWQVVIHLVFVCSALLAAV).

This sequence belongs to the UPF0114 family.

Its subcellular location is the cell membrane. The polypeptide is UPF0114 protein HPSH_00970 (Helicobacter pylori (strain Shi470)).